The primary structure comprises 888 residues: Serine/threonine-protein phosphatase 1 regulatory subunit 10 (888 aa).

Positions 1 to 348 (MGSGPIDPKE…EPAPPAEPMD (348 aa)) are interaction with TOX4. In terms of domain architecture, TFIIS N-terminal spans 73-147 (KLLNNWLTYS…SDWMAVIRSQ (75 aa)). Disordered stretches follow at residues 147–213 (QSST…STGL), 247–270 (SATA…NTAP), 306–400 (KKKK…KTVT), and 534–853 (VETL…HGGD). Basic and acidic residues-rich tracts occupy residues 153–166 (AEKD…EGKS) and 174–196 (PLTE…EKPK). A Glycyl lysine isopeptide (Lys-Gly) (interchain with G-Cter in SUMO2) cross-link involves residue Lys-179. Residues 248–258 (ATAAPGDAAPP) show a composition bias toward low complexity. Lys-262 is covalently cross-linked (Glycyl lysine isopeptide (Lys-Gly) (interchain with G-Cter in SUMO2)). Position 313 is a phosphoserine (Ser-313). Residues 325-334 (KTSTEQSTAK) are compositionally biased toward polar residues. A Phosphoserine modification is found at Ser-382. A necessary for interaction with PPP1CA region spans residues 388-417 (QLTRKGRKRKTVTWPEEGKLREYFYFELDE). Residues 393-408 (GRKRKTVTWPEEGKLR) form a necessary for interaction with PPP1CC region. Residues 394–423 (RKRKTVTWPEEGKLREYFYFELDETERVNV) carry the PP1-binding motif motif. At Thr-398 the chain carries Phosphothreonine. Residues 418–619 (TERVNVNKIK…LKQMLVPHGL (202 aa)) are interaction with WDR82. Over residues 540–551 (GGSGGSPDGAGG) the composition is skewed to gly residues. Phosphoserine occurs at positions 545 and 591. Over residues 583 to 595 (EILTSIMGSPNSH) the composition is skewed to polar residues. Positions 596-611 (PSEELLKQPDYSDKLK) are enriched in basic and acidic residues. A compositionally biased stretch (pro residues) spans 644–655 (PPGPGGPMPGPH). At Arg-665 the chain carries Omega-N-methylarginine. A compositionally biased stretch (low complexity) spans 674-690 (RGGDPFWDGPGDPMRGG). An omega-N-methylarginine mark is found at Arg-693 and Arg-737. Gly residues-rich tracts occupy residues 724–762 (ARGG…GSMG) and 784–794 (GPGGNMGGSGG). Residues 811–851 (PHDVPSHRGHDHRGPPPHEHRGHDGHGGGGHRGHDGGHSHG) are compositionally biased toward basic and acidic residues. Residues 854-882 (MSNRPVCRHFMMKGNCRYENNCAFYHPGV) form a C3H1-type zinc finger.

In terms of assembly, component of the PNUTS-PP1 complex (also named PTW/PP1 complex), composed of PPP1R10/PNUTS, TOX4, WDR82, and PPP1CA (or PPP1CB or PPP1CC). Post-translationally, phosphorylated on Ser-398 by PKA within the region necessary for interaction with PPP1CA.

It localises to the nucleus. The protein resides in the chromosome. Its function is as follows. Substrate-recognition component of the PNUTS-PP1 protein phosphatase complex, a protein phosphatase 1 (PP1) complex that promotes RNA polymerase II transcription pause-release, allowing transcription elongation. Promoter-proximal pausing by RNA polymerase II is a transcription halt following transcription initiation but prior to elongation, which acts as a checkpoint to control that transcripts are favorably configured for transcriptional elongation. The PNUTS-PP1 complex mediates the release of RNA polymerase II from promoter-proximal region of genes by catalyzing dephosphorylation of proteins involved in transcription, such as AFF4, CDK9, MEPCE, INTS12, NCBP1, POLR2M/GDOWN1 and SUPT6H. The PNUTS-PP1 complex also regulates RNA polymerase II transcription termination by mediating dephosphorylation of SUPT5H in termination zones downstream of poly(A) sites, thereby promoting deceleration of RNA polymerase II transcription. PNUTS-PP1 complex is also involved in the response to replication stress by mediating dephosphorylation of POLR2A at 'Ser-5' of the CTD, promoting RNA polymerase II degradation. The PNUTS-PP1 complex also plays a role in the control of chromatin structure and cell cycle progression during the transition from mitosis into interphase. PNUTS-PP1 complex mediates dephosphorylation of MYC, promoting MYC stability by preventing MYC ubiquitination by the SCF(FBXW7) complex. In addition to acts as a substrate-recognition component, PPP1R10/PNUTS also acts as a nuclear targeting subunit for the PNUTS-PP1 complex. In some context, PPP1R10/PNUTS also acts as an inhibitor of protein phosphatase 1 (PP1) activity by preventing access to substrates, such as RB. This chain is Serine/threonine-protein phosphatase 1 regulatory subunit 10, found in Mus musculus (Mouse).